Consider the following 349-residue polypeptide: tRNA pseudouridine synthase D (349 aa).

Position 27 (F27) interacts with substrate. D80 functions as the Nucleophile in the catalytic mechanism. A substrate-binding site is contributed by N129. Positions 155–303 (GVPNYFGAQR…VEAARRAMLL (149 aa)) constitute a TRUD domain. F329 is a binding site for substrate.

The protein belongs to the pseudouridine synthase TruD family.

It carries out the reaction uridine(13) in tRNA = pseudouridine(13) in tRNA. In terms of biological role, responsible for synthesis of pseudouridine from uracil-13 in transfer RNAs. The sequence is that of tRNA pseudouridine synthase D from Shigella sonnei (strain Ss046).